Consider the following 251-residue polypeptide: Pyrroloquinoline-quinone synthase (251 aa).

This sequence belongs to the PqqC family.

It catalyses the reaction 6-(2-amino-2-carboxyethyl)-7,8-dioxo-1,2,3,4,7,8-hexahydroquinoline-2,4-dicarboxylate + 3 O2 = pyrroloquinoline quinone + 2 H2O2 + 2 H2O + H(+). Its pathway is cofactor biosynthesis; pyrroloquinoline quinone biosynthesis. Ring cyclization and eight-electron oxidation of 3a-(2-amino-2-carboxyethyl)-4,5-dioxo-4,5,6,7,8,9-hexahydroquinoline-7,9-dicarboxylic-acid to PQQ. The polypeptide is Pyrroloquinoline-quinone synthase (Pseudomonas syringae pv. syringae (strain B728a)).